Consider the following 188-residue polypeptide: MRITIAGKIGSGKSTVSSELSRITGYTVYSSGTFFRETARKMNMSIEDFNVYSESHPEADYYTDETQKAFMQANDNIIVEGRLAGWISYLNGINAFRIFLYATYYTRLVRFAGRENIDIDSARDLMEKREKSEKERYRKLYGIDVDDLSIYDIVVNTEFMKPPEIAVYIANRIDEMSRKDIFTPRILR.

Residue 7–15 participates in ATP binding; the sequence is GKIGSGKST.

It belongs to the cytidylate kinase family. Type 2 subfamily.

The protein localises to the cytoplasm. The catalysed reaction is CMP + ATP = CDP + ADP. The enzyme catalyses dCMP + ATP = dCDP + ADP. This chain is Cytidylate kinase (cmk), found in Thermoplasma acidophilum (strain ATCC 25905 / DSM 1728 / JCM 9062 / NBRC 15155 / AMRC-C165).